We begin with the raw amino-acid sequence, 119 residues long: Ribosome-binding factor A (119 aa).

It belongs to the RbfA family. As to quaternary structure, monomer. Binds 30S ribosomal subunits, but not 50S ribosomal subunits or 70S ribosomes.

The protein resides in the cytoplasm. Its function is as follows. One of several proteins that assist in the late maturation steps of the functional core of the 30S ribosomal subunit. Associates with free 30S ribosomal subunits (but not with 30S subunits that are part of 70S ribosomes or polysomes). Required for efficient processing of 16S rRNA. May interact with the 5'-terminal helix region of 16S rRNA. The polypeptide is Ribosome-binding factor A (Chlorobium limicola (strain DSM 245 / NBRC 103803 / 6330)).